The sequence spans 242 residues: MDTPDYKRVVLKLSGEALAGNDGFGINPSVVNLISAQIKEVVELGVEVAIVVGGGNIWRGKLGSEMGMDRAAADQMGMLATIMNSLSLQDSLENIGVATRVQTSIDMRQIAEPYIRRKAIRHLEKGRVVIFAGGTGNPYFSTDTAAALRAAEIEADVILMAKNNVDGVYNADPKLDENAKKYEELSYLDVIKEGLEVMDTTASSLSMDNDIPLIVFSFTEQGNNIKRVILGEKIGTTVRGKK.

12 to 15 (KLSG) contacts ATP. The tract at residues 20 to 25 (GNDGFG) is involved in allosteric activation by GTP. Gly54 is a binding site for UMP. Residues Gly55 and Arg59 each contribute to the ATP site. UMP is bound by residues Asp74 and 135-142 (TGNPYFST). Residues Asn163, Tyr169, and Asp172 each coordinate ATP.

It belongs to the UMP kinase family. As to quaternary structure, homohexamer.

The protein resides in the cytoplasm. It catalyses the reaction UMP + ATP = UDP + ADP. It functions in the pathway pyrimidine metabolism; CTP biosynthesis via de novo pathway; UDP from UMP (UMPK route): step 1/1. Its activity is regulated as follows. Allosterically activated by GTP. Inhibited by UTP. In terms of biological role, catalyzes the reversible phosphorylation of UMP to UDP. The polypeptide is Uridylate kinase (Listeria innocua serovar 6a (strain ATCC BAA-680 / CLIP 11262)).